Here is a 275-residue protein sequence, read N- to C-terminus: Sororin-B (275 aa).

The span at 1–16 (MSERKKRGSSDADSRR) shows a compositional bias: basic and acidic residues. Disordered regions lie at residues 1–42 (MSER…PAPI) and 63–117 (NTGS…EIDV). Polar residues-rich tracts occupy residues 63 to 76 (NTGSQFTPKVSNVT) and 93 to 112 (NAFSEQSQMDPKDVTSQSSA). Residues 91-93 (KEN) carry the KEN box motif. The short motif at 186–188 (FGF) is the FGF motif element. Positions 253-275 (VDEWAAIMNAEFDEAEKFDLTVE) are C-terminal Sororin domain.

It belongs to the sororin family. In terms of assembly, interacts with the APC/C complex. Interacts with the chromatin-bound cohesin complex; the interaction is indirect, occurs after DNA replication and requires acetylation of the cohesin component smc3. Interacts (via the FGF motif) with pds5a and pds5b; the interaction is direct and prevents the interaction of pds5a with wapl. Ubiquitinated by the APC/C complex in G1, leading to its degradation.

The protein localises to the nucleus. The protein resides in the chromosome. It localises to the cytoplasm. In terms of biological role, regulator of sister chromatid cohesion in mitosis stabilizing cohesin complex association with chromatin. May antagonize the action of wapl which stimulates cohesin dissociation from chromatin. Cohesion ensures that chromosome partitioning is accurate in both meiotic and mitotic cells and plays an important role in DNA repair. Required for efficient DNA double-stranded break repair. This is Sororin-B (cdca5-b) from Xenopus laevis (African clawed frog).